Here is a 901-residue protein sequence, read N- to C-terminus: Envelope glycoprotein B (901 aa).

The N-terminal stretch at 1–34 (MRPVRGIARSRILSCSWRGTWTSALTILYLGVYC) is a signal peptide. At 35 to 736 (ESTTVTPTTV…GALVTFVTNP (702 aa)) the chain is on the virion surface side. Residues asparagine 53, asparagine 60, and asparagine 66 are each glycosylated (N-linked (GlcNAc...) asparagine; by host). 4 disulfides stabilise this stretch: cysteine 84/cysteine 533, cysteine 101/cysteine 489, cysteine 174/cysteine 239, and cysteine 331/cysteine 380. An involved in fusion and/or binding to host membrane region spans residues 141 to 147 (SYKYVTY). Asparagine 197 carries an N-linked (GlcNAc...) asparagine; by host glycan. An involved in fusion and/or binding to host membrane region spans residues 226–233 (GSVWLYKE). 10 N-linked (GlcNAc...) asparagine; by host glycosylation sites follow: asparagine 270, asparagine 289, asparagine 328, asparagine 372, asparagine 398, asparagine 406, asparagine 436, asparagine 537, asparagine 571, and asparagine 623. A disulfide bond links cysteine 559 and cysteine 596. Hydrophobic membrane proximal region stretches follow at residues 683-734 (VERV…TFVT) and 714-734 (AVGA…TFVT). Residues 737 to 757 (FGAFVVFLFCVGCITLVITVY) form a helical membrane-spanning segment. Residues 758-901 (RRQRRAMQRP…KLNTEDDVHV (144 aa)) are Intravirion-facing. 2 disordered regions span residues 794–813 (GPEG…APYG) and 852–901 (DDKK…DVHV). Basic and acidic residues-rich tracts occupy residues 852 to 864 (DDKK…KSSK) and 872 to 883 (SETRRRPGIMDR). Residues 890–893 (YQKL) carry the Internalization motif motif.

It belongs to the herpesviridae glycoprotein B family. As to quaternary structure, homotrimer; disulfide-linked. Binds to heparan sulfate proteoglycans. Interacts with gH/gL heterodimer. Post-translationally, a proteolytic cleavage by host furin generates two subunits that remain linked by disulfide bonds.

It localises to the virion membrane. The protein resides in the host cell membrane. Its subcellular location is the host endosome membrane. The protein localises to the host Golgi apparatus membrane. Envelope glycoprotein that forms spikes at the surface of virion envelope. Essential for the initial attachment to heparan sulfate moieties of the host cell surface proteoglycans. Involved in fusion of viral and cellular membranes leading to virus entry into the host cell. Following initial binding to its host receptors, membrane fusion is mediated by the fusion machinery composed at least of gB and the heterodimer gH/gL. May be involved in the fusion between the virion envelope and the outer nuclear membrane during virion egress. This Guinea pig cytomegalovirus (strain 22122) (GPCMV) protein is Envelope glycoprotein B.